Here is a 171-residue protein sequence, read N- to C-terminus: Anthrone oxygenase dmxR16 (171 aa).

Helical transmembrane passes span 21-41 (VIAAAFLSAITAGAMANISMI), 67-87 (GHIILPGICVGTCGLYAFSAL), and 96-116 (YALAGITTLSLVPFTWVFMTP). Residues N118 and N129 are each glycosylated (N-linked (GlcNAc...) asparagine). A helical transmembrane segment spans residues 145–165 (WLHATRSMFPLIGAILGFTGI).

This sequence belongs to the anthrone oxygenase family.

It localises to the membrane. The catalysed reaction is emodin anthrone + O2 = emodin + H2O + H(+). Its pathway is secondary metabolite biosynthesis. In terms of biological role, anthrone oxygenase; part of the gene cluster that mediates the biosynthesis of the dimeric xanthones cryptosporioptides. The pathway begins with the synthesis of atrochrysone thioester by the polyketide synthase dmx-nrPKS. The atrochrysone carboxyl ACP thioesterase dmxR1 then breaks the thioester bond and releases the atrochrysone carboxylic acid from dmx-nrPKS. Atrochrysone carboxylic acid is decarboxylated by the decarboxylase dmxR15, and oxidized by the anthrone oxygenase dmxR16 to yield emodin. Emodin is then reduced to emodin hydroquinone by the oxidoreductase dmxR7. A-ring reduction by the short chain dehydrogenase dmxR18, dehydration by the scytalone dehydratase-like protein dmxR17 and probable spontaneous re-oxidation, results in overall deoxygenation to chrysophanol. Baeyer-Villiger oxidation by the Baeyer-Villiger monooxygenase (BVMO) dmxR6 then yields monodictylactone in equilibrium with monodictyphenone. In the case of the cryptosporioptides biosynthesis, monodictylactone is reduced at C-12 to an alcohol (by the short chain dehydrogenases dmxR12 or dmxR8) and hydroxylated at C-5 by dmxR9, yielding the electron-rich aromatic which could eliminate H(2)O to form the ortho-quinonemethide, followed by tautomerisation to paraquinone and complete the formal reduction to produce the 10-methylgroup. Conjugate addition of C-4a-OH to the resulting paraquinone by the monooxygenase dmxR10 then gives cyclohexadienone, which is then reduced at C-5 by the short chain dehydrogenase dmxR3 to give the dihydroxanthone. The 6,7-epoxide in the cryptosporioptides could be introduced by the cytochrome P450 monooxygenase dmxL3. The highly reducing PKS dmxL2 manufactures butyrate, which is further carboxylated by dmxL1 to form ethylmalonate. It is not yet clear whether the carboxylation occurs while the butyrate is attached to the ACP of dmxL2, but this unusual fungal metabolite could then be esterified to O-5 by the O-acetyltransferase dmxR13. Finally, dimerization performed by dmxR5 gives the observed dimers cryptosporioptides A, B and C as the final products of the pathway. The sequence is that of Anthrone oxygenase dmxR16 from Cryptosporiopsis sp. (strain 8999).